The following is a 179-amino-acid chain: Ubiquitin-conjugating enzyme E2 C (179 aa).

Polar residues predominate over residues 1–14; the sequence is MASQNRDPAATSVT. Residues 1-31 are disordered; that stretch reads MASQNRDPAATSVTAARKGAEPSGGAARGPV. At A2 the chain carries N-acetylalanine. S3 bears the Phosphoserine mark. The 146-residue stretch at 30-175 folds into the UBC core domain; the sequence is PVGKRLQQEL…LQETYSKQVT (146 aa). The active-site Glycyl thioester intermediate is C114.

Belongs to the ubiquitin-conjugating enzyme family. As to quaternary structure, component of the APC/C complex, composed of at least 14 distinct subunits that assemble into a complex of at least 19 chains with a combined molecular mass of around 1.2 MDa. Within this complex, directly interacts with ANAPC2. Post-translationally, autoubiquitinated by the APC/C complex, leading to its degradation by the proteasome. Its degradation plays a central role in APC/C regulation, allowing cyclin-A accumulation before S phase entry. APC/C substrates inhibit the autoubiquitination of UBE2C/UBCH10 but not its E2 function, hence APC/C remaining active until its substrates have been destroyed.

It catalyses the reaction S-ubiquitinyl-[E1 ubiquitin-activating enzyme]-L-cysteine + [E2 ubiquitin-conjugating enzyme]-L-cysteine = [E1 ubiquitin-activating enzyme]-L-cysteine + S-ubiquitinyl-[E2 ubiquitin-conjugating enzyme]-L-cysteine.. The catalysed reaction is S-ubiquitinyl-[E1 ubiquitin-activating enzyme]-L-cysteine + [acceptor protein]-L-lysine = [E1 ubiquitin-activating enzyme]-L-cysteine + N(6)-monoubiquitinyl-[acceptor protein]-L-lysine.. It participates in protein modification; protein ubiquitination. Accepts ubiquitin from the E1 complex and catalyzes its covalent attachment to other proteins. In vitro catalyzes 'Lys-11'- and 'Lys-48'-linked polyubiquitination. Acts as an essential factor of the anaphase promoting complex/cyclosome (APC/C), a cell cycle-regulated ubiquitin ligase that controls progression through mitosis. Acts by initiating 'Lys-11'-linked polyubiquitin chains on APC/C substrates, leading to the degradation of APC/C substrates by the proteasome and promoting mitotic exit. This Macaca fascicularis (Crab-eating macaque) protein is Ubiquitin-conjugating enzyme E2 C (UBE2C).